Here is a 672-residue protein sequence, read N- to C-terminus: Nuclear RNA export factor 1 (672 aa).

Disordered regions lie at residues 1-52 (MPKR…SFKP) and 73-101 (DEDD…IPRG). The segment covering 40-49 (RKDRNKRRVS) has biased composition (basic residues). The 81-residue stretch at 113 to 193 (WYQVTLQNAQ…PRVRSGIPLV (81 aa)) folds into the RRM domain. LRR repeat units lie at residues 255 to 280 (DLEA…KRLP), 281 to 304 (NLKI…LRNL), 305 to 332 (SILE…EVRR), and 333 to 360 (KFPK…GRLL). An NTF2 domain is found at 375-529 (VVRQFLDQYF…FCIRNETIFI (155 aa)). Residues 541-564 (KRSQHQPAPGAMPSTSSAVTSPQA) are disordered. The segment covering 553–563 (PSTSSAVTSPQ) has biased composition (polar residues). A Phosphoserine modification is found at S561. A TAP-C domain is found at 618 to 672 (STKMQMIEAMSAQSQMNVIWSRKCLEETNWDFNHAAFVFEKLFKENKIPPEAFMK).

This sequence belongs to the NXF family. Interacts with Nxt1. Interacts with ZC3H3. Forms a complex with Nup358/RanBP2, RanGAP and Nxt1. Interacts with Nup54 and Nup58. Interacts with Orc3 and Hpr1. As to expression, expressed ubiquitously.

The protein localises to the nucleus. It localises to the nucleoplasm. Its subcellular location is the cytoplasm. It is found in the nucleus envelope. Functionally, mediates the export of the majority of mRNAs from the nucleus to the cytoplasm. In ovarian follicle cells, plays a role in transposable element silencing regulation by enabling the nuclear export of flamenco (flam) transcripts and subsequent piRNA biogenesis. The sequence is that of Nuclear RNA export factor 1 from Drosophila melanogaster (Fruit fly).